The following is a 180-amino-acid chain: Signaling threshold-regulating transmembrane adapter 1 (180 aa).

Over 1–24 (MSRDYNCTTDDQLAWGIPSISHAW) the chain is Extracellular. N-linked (GlcNAc...) asparagine glycosylation is present at asparagine 6. The helical; Signal-anchor for type III membrane protein transmembrane segment at 25–45 (GLWALLGVVTVLLLISLAALL) threads the bilayer. The Cytoplasmic segment spans residues 46–180 (SQWTRGRRRN…AYANSQPAPS (135 aa)). Serine 63 and serine 66 each carry phosphoserine. Tyrosine 73 carries the phosphotyrosine modification. Residues 73–76 (YGNL) form an interaction with GRB2 region. The segment at 81 to 103 (TGRLSQEPRSEEQDPPSSGGLAR) is disordered. Phosphoserine occurs at positions 85 and 90. A phosphotyrosine mark is found at tyrosine 111, tyrosine 132, and tyrosine 153. Positions 130 to 135 (IKYCEV) are interaction with PTPN11. The tract at residues 153–156 (YASV) is interaction with CSK. Serine 166 is modified (phosphoserine). Tyrosine 172 bears the Phosphotyrosine mark. Residues 172 to 175 (YANS) are interaction with GRB2.

In terms of assembly, homodimer; disulfide-linked. When phosphorylated, interacts with PTPN11/SHP2, GRB2 and CSK. Post-translationally, phosphorylated on tyrosines upon TCR activation; which leads to the recruitment of PTPN11, GRB2 and CSK. Expressed in thymus and spleen, with highest levels in immature thymocytes (at protein level).

It is found in the cell membrane. Negatively regulates T-cell antigen receptor (TCR)-mediated signaling. Involved in positive selection of T-cells. The protein is Signaling threshold-regulating transmembrane adapter 1 (Sit1) of Mus musculus (Mouse).